The following is a 535-amino-acid chain: Beta-hexosaminidase 3 (535 aa).

The N-terminal stretch at 1 to 24 is a signal peptide; sequence MRGSGAKIAGVLPLFMLFIAGTIS. N-linked (GlcNAc...) asparagine glycosylation is present at Asn92. Cysteines 292 and 334 form a disulfide. Glu329 (proton donor) is an active-site residue. Asn331, Asn405, Asn441, and Asn496 each carry an N-linked (GlcNAc...) asparagine glycan. A disulfide bridge connects residues Cys506 and Cys532.

This sequence belongs to the glycosyl hydrolase 20 family. Post-translationally, N-glycosylated. As to expression, expressed in roots, leaves, stems, flowers and siliques.

It localises to the cell membrane. It catalyses the reaction Hydrolysis of terminal non-reducing N-acetyl-D-hexosamine residues in N-acetyl-beta-D-hexosaminides.. Slightly inhibited by N-acetylcastanospermine. In terms of biological role, has a broad substrate specificity. Can use synthetic substrates such as pyridylaminated chitotriose, p-nitrophenyl-beta-N-acetylglucosaminide, p-nitrophenyl-2-acetamido-2-deoxy-beta-D-glucopyranoside (pNP-GlcNAc), p-nitrophenyl-2-acetamido-2-deoxy-beta-D-galactopyranoside (pNP-GalNAc), 4-methylumbelliferyl-2-acetamido-2-deoxy-beta-D-glucopyranoside (MU-GlcNAc), and 4-methylumbelliferyl-6-sulfo-2-acetamido-2-deoxy-beta-D-glucopyranoside (MU-GlcNAc-6SO(4)) as substrates. Removes terminal GlcNAc residues from alpha1,3- and alpha1,6-mannosyl branches of biantennary N-glycans without any strict branch preference. Required for the presence of paucimannosidic N-glycans in glycoproteins of roots and leaves. In Arabidopsis thaliana (Mouse-ear cress), this protein is Beta-hexosaminidase 3 (HEXO3).